We begin with the raw amino-acid sequence, 108 residues long: C-C motif chemokine 19 (108 aa).

Residues 1 to 25 (MAPRVTPLLAFSLLVLWTFPAPTLG) form the signal peptide. 2 cysteine pairs are disulfide-bonded: C33–C59 and C34–C75. The N-linked (GlcNAc...) asparagine glycan is linked to N100.

The protein belongs to the intercrine beta (chemokine CC) family. In terms of assembly, interacts with TNFAIP6 (via Link domain). As to expression, highly expressed by dendritic cells in mesenteric and peripheral lymph nodes. Significant expression in spleen (T cell zone or periarteriolar lymphatic sheath) and Peyer patches. Low expression in thymus.

Its subcellular location is the secreted. Functionally, strongly chemotactic for naive (L-selectinhi) CD4 T-cells and for CD8 T-cells and weakly attractive for resting B-cells and memory (L-selectinlo) CD4 T-cells. May play a role in promoting encounters between recirculating T-cells and dendritic cells and in the migration of activated B-cells into the T-zone of secondary lymphoid tissues. Binds to chemokine receptor CCR7. Binds to atypical chemokine receptor ACKR4 and mediates the recruitment of beta-arrestin (ARRB1/2) to ACKR4. This chain is C-C motif chemokine 19 (Ccl19), found in Mus musculus (Mouse).